The chain runs to 1052 residues: RTX-III toxin determinant A from serotype 8 (1052 aa).

A run of 3 helical transmembrane segments spans residues 248–265, 275–334, and 372–418; these read GLDI…SFAL, KVAA…LRVA, and DASI…GILE. Hemolysin-type calcium-binding repeat units follow at residues 744–761, 762–779, 780–797, 798–815, 826–843, and 844–861; these read KGSK…DDLL, NGND…NDEL, RGDN…NDKL, LGGN…NDEL, RGGK…SDLL, and DGGE…SDFY.

This sequence belongs to the RTX prokaryotic toxin (TC 1.C.11) family. In terms of processing, palmitoylated by ApxIIIC. The toxin only becomes active when modified.

The protein localises to the secreted. It localises to the host cell membrane. Its function is as follows. Does not have hemolytic activity but shows a strong cytotoxicity towards alveolar macrophages and neutrophils. The protein is RTX-III toxin determinant A from serotype 8 (apxIIIA) of Actinobacillus pleuropneumoniae (Haemophilus pleuropneumoniae).